A 421-amino-acid chain; its full sequence is Serine--tRNA ligase (421 aa).

Residue 229 to 231 participates in L-serine binding; sequence TAE. ATP is bound at residue 260-262; it reads RSE. E283 contributes to the L-serine binding site. An ATP-binding site is contributed by 347–350; sequence EISS. S382 contributes to the L-serine binding site.

The protein belongs to the class-II aminoacyl-tRNA synthetase family. Type-1 seryl-tRNA synthetase subfamily. Homodimer. The tRNA molecule binds across the dimer.

The protein resides in the cytoplasm. The catalysed reaction is tRNA(Ser) + L-serine + ATP = L-seryl-tRNA(Ser) + AMP + diphosphate + H(+). It carries out the reaction tRNA(Sec) + L-serine + ATP = L-seryl-tRNA(Sec) + AMP + diphosphate + H(+). Its pathway is aminoacyl-tRNA biosynthesis; selenocysteinyl-tRNA(Sec) biosynthesis; L-seryl-tRNA(Sec) from L-serine and tRNA(Sec): step 1/1. Functionally, catalyzes the attachment of serine to tRNA(Ser). Is also able to aminoacylate tRNA(Sec) with serine, to form the misacylated tRNA L-seryl-tRNA(Sec), which will be further converted into selenocysteinyl-tRNA(Sec). The chain is Serine--tRNA ligase from Symbiobacterium thermophilum (strain DSM 24528 / JCM 14929 / IAM 14863 / T).